Consider the following 299-residue polypeptide: Probable alpha-L-glutamate ligase (299 aa).

Residues 112–294 (LQLLTEQGIA…IALQMIVHIE (183 aa)) form the ATP-grasp domain. ATP-binding positions include Lys148, 185–186 (DF), Asp194, and 218–220 (RAN). Asp255, Glu267, and Asn269 together coordinate Mg(2+). Mn(2+) contacts are provided by Asp255, Glu267, and Asn269.

Belongs to the RimK family. Mg(2+) is required as a cofactor. Requires Mn(2+) as cofactor.

In Histophilus somni (strain 129Pt) (Haemophilus somnus), this protein is Probable alpha-L-glutamate ligase.